The sequence spans 380 residues: Erythronate-4-phosphate dehydrogenase (380 aa).

Positions 45 and 66 each coordinate substrate. An intrachain disulfide couples cysteine 65 to cysteine 90. Residues 126-127 (QV), aspartate 146, threonine 175, 206-208 (ASR), and aspartate 232 each bind NAD(+). Residue arginine 208 is part of the active site. Residue glutamate 237 is part of the active site. Histidine 254 serves as the catalytic Proton donor. Residue glycine 257 participates in NAD(+) binding. Tyrosine 258 is a binding site for substrate.

The protein belongs to the D-isomer specific 2-hydroxyacid dehydrogenase family. PdxB subfamily. Homodimer.

It is found in the cytoplasm. It carries out the reaction 4-phospho-D-erythronate + NAD(+) = (R)-3-hydroxy-2-oxo-4-phosphooxybutanoate + NADH + H(+). Its pathway is cofactor biosynthesis; pyridoxine 5'-phosphate biosynthesis; pyridoxine 5'-phosphate from D-erythrose 4-phosphate: step 2/5. In terms of biological role, catalyzes the oxidation of erythronate-4-phosphate to 3-hydroxy-2-oxo-4-phosphonooxybutanoate. This chain is Erythronate-4-phosphate dehydrogenase, found in Pseudomonas aeruginosa (strain ATCC 15692 / DSM 22644 / CIP 104116 / JCM 14847 / LMG 12228 / 1C / PRS 101 / PAO1).